A 397-amino-acid polypeptide reads, in one-letter code: Phosphoglycerate kinase (397 aa).

Substrate is bound by residues 26-28 (DLN), Arg-42, 65-68 (HLGR), Arg-119, and Arg-152. Residues Lys-203, Glu-325, and 351–354 (GGDT) contribute to the ATP site.

The protein belongs to the phosphoglycerate kinase family. In terms of assembly, monomer.

Its subcellular location is the cytoplasm. It catalyses the reaction (2R)-3-phosphoglycerate + ATP = (2R)-3-phospho-glyceroyl phosphate + ADP. It functions in the pathway carbohydrate degradation; glycolysis; pyruvate from D-glyceraldehyde 3-phosphate: step 2/5. The polypeptide is Phosphoglycerate kinase (Bordetella pertussis (strain Tohama I / ATCC BAA-589 / NCTC 13251)).